The following is a 160-amino-acid chain: RNA-binding protein 3 (160 aa).

In terms of domain architecture, RRM spans 6–84 (GKLFVGGLNF…RQIRVDHAGK (79 aa)). Residue Arg47 is modified to Omega-N-methylarginine. Residues 81 to 116 (HAGKSARGSRGGAFGSYERGRGYPRGGGDQGYGSGR) form a disordered region. Positions 103 to 114 (YPRGGGDQGYGS) are enriched in gly residues. An Asymmetric dimethylarginine; alternate modification is found at Arg105. Dimethylated arginine; alternate is present on Arg105. Arg105 carries the omega-N-methylarginine; alternate modification. Omega-N-methylarginine is present on residues Arg120 and Arg134. Positions 135–160 (SRDYGGRSQGGYDRYSGGNYRDNYDN) are disordered. Ser150 carries the post-translational modification Phosphoserine. Tyr158 carries the post-translational modification Phosphotyrosine.

Interacts with RPL4. Associates with the 60S ribosomal subunits.

It localises to the nucleus. The protein resides in the cytoplasm. The protein localises to the cell projection. Its subcellular location is the dendrite. Cold-inducible mRNA binding protein that enhances global protein synthesis at both physiological and mild hypothermic temperatures. Reduces the relative abundance of microRNAs, when overexpressed. Enhances phosphorylation of translation initiation factors and active polysome formation. In Capra hircus (Goat), this protein is RNA-binding protein 3.